Here is a 417-residue protein sequence, read N- to C-terminus: Gamma-glutamyl phosphate reductase (417 aa).

The protein belongs to the gamma-glutamyl phosphate reductase family.

The protein localises to the cytoplasm. It carries out the reaction L-glutamate 5-semialdehyde + phosphate + NADP(+) = L-glutamyl 5-phosphate + NADPH + H(+). Its pathway is amino-acid biosynthesis; L-proline biosynthesis; L-glutamate 5-semialdehyde from L-glutamate: step 2/2. In terms of biological role, catalyzes the NADPH-dependent reduction of L-glutamate 5-phosphate into L-glutamate 5-semialdehyde and phosphate. The product spontaneously undergoes cyclization to form 1-pyrroline-5-carboxylate. The chain is Gamma-glutamyl phosphate reductase from Streptococcus agalactiae serotype Ia (strain ATCC 27591 / A909 / CDC SS700).